Consider the following 363-residue polypeptide: S-adenosylmethionine:tRNA ribosyltransferase-isomerase (363 aa).

It belongs to the QueA family. Monomer.

It is found in the cytoplasm. It carries out the reaction 7-aminomethyl-7-carbaguanosine(34) in tRNA + S-adenosyl-L-methionine = epoxyqueuosine(34) in tRNA + adenine + L-methionine + 2 H(+). It participates in tRNA modification; tRNA-queuosine biosynthesis. Its function is as follows. Transfers and isomerizes the ribose moiety from AdoMet to the 7-aminomethyl group of 7-deazaguanine (preQ1-tRNA) to give epoxyqueuosine (oQ-tRNA). This chain is S-adenosylmethionine:tRNA ribosyltransferase-isomerase, found in Mannheimia succiniciproducens (strain KCTC 0769BP / MBEL55E).